Reading from the N-terminus, the 259-residue chain is MPRYKLTVEYDGTPYVGWQRQDNGPSVQGALEAAVLGLTGETVAIRGAGRTDSGVHASGQVAHVDLLRQWIPYKLRNALNAHLAQAGQAISILAAEAVPDAFDARFSALKRHYLYRIMSRPSRLALEANRAWWVSKPLDHEAMHAAAQMLVGNHDFTTFRSVHCQAISPVRTLDRLDVSRNGDLIEIRASAQSFLHNQIRSFAGTLKMAGEGKMTPEDVRAALEARDRKACGPVAPPQGLYFLQVDYPTDGNWRPYSKT.

The active-site Nucleophile is aspartate 52. Position 113 (tyrosine 113) interacts with substrate.

Belongs to the tRNA pseudouridine synthase TruA family. In terms of assembly, homodimer.

The catalysed reaction is uridine(38/39/40) in tRNA = pseudouridine(38/39/40) in tRNA. In terms of biological role, formation of pseudouridine at positions 38, 39 and 40 in the anticodon stem and loop of transfer RNAs. The chain is tRNA pseudouridine synthase A from Allorhizobium ampelinum (strain ATCC BAA-846 / DSM 112012 / S4) (Agrobacterium vitis (strain S4)).